We begin with the raw amino-acid sequence, 400 residues long: Probable aspartate/prephenate aminotransferase (400 aa).

The L-aspartate site is built by glycine 39, tryptophan 125, and asparagine 175. An N6-(pyridoxal phosphate)lysine modification is found at lysine 239. An L-aspartate-binding site is contributed by arginine 375.

Belongs to the class-I pyridoxal-phosphate-dependent aminotransferase family. As to quaternary structure, homodimer. It depends on pyridoxal 5'-phosphate as a cofactor.

It is found in the cytoplasm. The catalysed reaction is L-aspartate + 2-oxoglutarate = oxaloacetate + L-glutamate. It carries out the reaction L-arogenate + 2-oxoglutarate = prephenate + L-glutamate. In terms of biological role, catalyzes the reversible conversion of aspartate and 2-oxoglutarate to glutamate and oxaloacetate. Can also transaminate prephenate in the presence of glutamate. In Rhizobium leguminosarum bv. phaseoli, this protein is Probable aspartate/prephenate aminotransferase (aspC).